The following is a 181-amino-acid chain: Probable pyruvoyl-dependent arginine decarboxylase (181 aa).

Ser43 is subject to Pyruvic acid (Ser).

The protein belongs to the PdaD family. Pyruvate serves as cofactor.

It catalyses the reaction L-arginine + H(+) = agmatine + CO2. The sequence is that of Probable pyruvoyl-dependent arginine decarboxylase from Chlorobium phaeovibrioides (strain DSM 265 / 1930) (Prosthecochloris vibrioformis (strain DSM 265)).